Here is a 445-residue protein sequence, read N- to C-terminus: C4-dicarboxylate transport protein 2 (445 aa).

Transmembrane regions (helical) follow at residues 24 to 44, 62 to 82, 96 to 116, 163 to 183, 201 to 221, 237 to 257, 334 to 354, and 366 to 386; these read ILYVQVLIAILIGIVVGWLFP, LIKMVIAPIIFCTVVSGIAHI, LVYFEIVSTFALLLGLIVGNL, GDILQVLLFAILFGFALMALG, FGVIAIVMKAAPVGAFGAMAF, LIALFYITAGLFVVIVLGLIA, ALGVDLSFSQQVTILIVAMLT, and FITLAATLSVVNPALVPGMAI.

The protein belongs to the dicarboxylate/amino acid:cation symporter (DAACS) (TC 2.A.23) family.

The protein localises to the cell inner membrane. Responsible for the transport of dicarboxylates such as succinate, fumarate, and malate from the periplasm across the membrane. This Bradyrhizobium sp. (strain ORS 278) protein is C4-dicarboxylate transport protein 2.